Reading from the N-terminus, the 163-residue chain is Endoribonuclease YbeY (163 aa).

Residues histidine 123, histidine 127, and histidine 133 each coordinate Zn(2+).

It belongs to the endoribonuclease YbeY family. Zn(2+) is required as a cofactor.

Its subcellular location is the cytoplasm. Single strand-specific metallo-endoribonuclease involved in late-stage 70S ribosome quality control and in maturation of the 3' terminus of the 16S rRNA. The protein is Endoribonuclease YbeY of Helicobacter hepaticus (strain ATCC 51449 / 3B1).